The sequence spans 278 residues: Poly(3-hydroxyoctanoate) depolymerase (278 aa).

Residues 1–33 (MPLRTLLCGLLLAVCLGQHALAASRCSERPRTL) form the signal peptide.

The protein localises to the secreted. The enzyme catalyses Hydrolyzes the polyester poly{oxycarbonyl[(R)-2-pentylethylene]} to oligomers.. Hydrolysis of poly(3-hydroxyoctanoic acid). The polypeptide is Poly(3-hydroxyoctanoate) depolymerase (phaZ) (Pseudomonas fluorescens).